Reading from the N-terminus, the 418-residue chain is Gamma-glutamyl phosphate reductase (418 aa).

This sequence belongs to the gamma-glutamyl phosphate reductase family.

It is found in the cytoplasm. It carries out the reaction L-glutamate 5-semialdehyde + phosphate + NADP(+) = L-glutamyl 5-phosphate + NADPH + H(+). It functions in the pathway amino-acid biosynthesis; L-proline biosynthesis; L-glutamate 5-semialdehyde from L-glutamate: step 2/2. Catalyzes the NADPH-dependent reduction of L-glutamate 5-phosphate into L-glutamate 5-semialdehyde and phosphate. The product spontaneously undergoes cyclization to form 1-pyrroline-5-carboxylate. This Colwellia psychrerythraea (strain 34H / ATCC BAA-681) (Vibrio psychroerythus) protein is Gamma-glutamyl phosphate reductase.